Reading from the N-terminus, the 2259-residue chain is MKQELSKNKYLYKRLKLEEIQNPRYFFEVWSESNLVKFLIRIFFNKENFIKLFDFRIISSLILQDLHSSKSNKSSILKTFLLLTLSVFLYHLNNKAIIEKKHLNLVKIVYGHINYSKYKEKNLKENFNKKNISTFTNHSLSKILSLKKKKKYSIIKTNLKKRIHAISTYNQNLVGDSEWWKLCIIEQILPSWKISSSSIKKVEILLKEKTTDDLKHFFEFYIDNILCQNYNWETKFNFIFCKTIKNNKKLNLSTDNKILTNSLIFQIFSAFCEKLLFEIENPLNLNQLNSTIKLKNNQLFFSFSKSYQKKNSVELLYLLKKNVSQNFKFWGENDSLIVKSYIFIKKKGWFFFNNYAEFYIWQLYKNSLVQYEDDLDNFNENKSNLKLFKLNFLQNKKKNLKINSDLSEISYQITKYILYKVKNSNKAINNYKIIDKNFKFGNKKKTEIKKTLNLVETNFFISNKNFFKWILYKKNLNNKNVKQNIDSTIWDLCFFFKNENNKIKSNFFLSPFFKKYLLYWIKNLFREEEKYITNPNFFENKKNLNFSNNSFSNSLFIDELNMAFSLTKKYRKNFEIIKQQKNKFFRNRKKSDIHRLIRLCKIKKTYQKLNSFIFSDYFYKIIYKKKYDINNLNLSTNLKLYTNHFYLLKSLINNHFNIEKYNKFLLFQIKYFVNLIISLDQINLLIIKQNLLFSKKINNDIHYQTNENFKLKKKLLVNKIIYKKTKIYLKYDLKKKFQSYNFVTNSFIKNRISYKYIYNNYYKNLTESLNHLLLIFSSDKKINLKNITKNIIDQKIVNWKKKGKSYFSYKIIKKNIFNYWKYNKYKLIDKKNKNKNTFKFFIKKQRNLIVLSNKTKFIDNKNSIIKWSKKLNKKNTYIFYKTFLVIFYENFNNISKLLLYYSKIFNIQNNFLKKKLNETNLVQQIKFNIYYKLKIHFYFDKILTTKFLINYFNNNQIYLESFNNNIFSLILQNQKSYFNSIQMSDKILLNSQFCKADTSKLVSFLYYSDLNYKKKLNFYLKKKKSNLSYLELIKIFSIKKKKTLSTNELTFFSKILNENSNIELKIYKTFLFEKLEQFNNENLLFIHNFNLNKLANSFVSFNPIFSTKKYLEKNISLQKSLKKNNDFYPIDSSENYLLSEFFIKIQNENTRIINKINKLFIINSNSEKFLINNILKKNTNNKKFNSETNKKRILSFSKNSIKLIPQTERFKIFKNSSFSLKLSSLFEKYIPWFFTFKWWKYFQNLFLNLYLEISLNISDQFYYILPTILQNRKKNLDYLVENLFFNLKNKFFGNSFGIWNSRLLKQINKQHKSKENQLPWFSLNLVNKWNRHYVVTISLVIFSYFILQKYFSILLGSDYLELWADFKIIQYLVDSSRGIYLDNLLHNNSIKFIKSENLLIHFFKNSKHYIKNIKFYLFTKKKINKLLIKNKGIDLSRRERKLLVQSLITDKSIDRYRPNFIYNTNSTNFQFGNQIIKQQKIKNYLENLTEDYQKNLINYPSHQFYLAENLVFLSSWQKATSLNTLWQINTLKSTFYKKPIPLELRLFSSKGILLIGSQETGRSYLVKNLAANSFIPLIKISINKLLYNKPDILTESWINILMESLRRLNLILELAEKLSPCIIWMPNIHELNVNRSTQNVESDPTFLLGIFLKYFQTGFSKKNTNNIIIIGSTHLPKKVDPALISPNRLDRLINIRTFNILQRQKKISILLYSKYSKYFYSKKKKSSLNEFGSRTIGYNARDLAGLINEILLISINQNQSTIQKKTIRLAFHRQTLGSTYINNKINFTKNYGILFYKIGKAIVQNLFIKNSSKNPLYFGNDLWKKNFYYLSKWYLEPSIFESTIKEFTILPHILGCLAGLAARDSWFILKNKPDNLISLDKYAENDFYLACGILESLLRDFSWLEIFEEKNINKKNFFNFQFQTKNPLHMVKKGLYQLTSNIVWAPKISRLNFIRTNLFNWINRPNEFEITSNLKKADKKNITGSSDNSHSFEIIQHKIKEQLPYERILSRIRRRNVQELESQLEDILLEEQFVILGFSRLFTEYRMESQLSNKPLIFIGGRFLWDPTGLLYQNHNFIFSRQDLSIDGEMLRRLYVTYGARREREKSRSSQKIKQFFLRRGYGRDSINNFSINWWNQLPFIEKNNIETFKRIEGIGVQLKRPQVFTPVYLYQRWLIENPQKILTRFELLNNQQKWLKTNKLLLNDSLIYNTLLEIYQYLLQFFILHQVLLNEMTNVLLKNKWLFQNEIEDFMNIINKNN.

Residue 1556–1563 (GSQETGRS) coordinates ATP.

It belongs to the Ycf2 family.

It is found in the plastid. Its subcellular location is the chloroplast stroma. Its function is as follows. Probable ATPase of unknown function. Its presence in a non-photosynthetic plant (Epifagus virginiana) and experiments in tobacco indicate that it has an essential function which is probably not related to photosynthesis. The protein is Protein Ycf2 of Physcomitrium patens (Spreading-leaved earth moss).